The sequence spans 814 residues: Oxysterol-binding protein-related protein 1C (814 aa).

Positions G103 to D235 constitute a PH domain. The stretch at L300–N367 forms a coiled coil. Disordered stretches follow at residues V319–E366 and S379–K411. Over residues E347–E366 the composition is skewed to acidic residues. Residues S379–S394 show a composition bias toward low complexity. A compositionally biased stretch (acidic residues) spans S395 to D407.

This sequence belongs to the OSBP family. Expressed in roots, leaves, stems, flowers and pollen.

In terms of biological role, may be involved in the transport of sterols. The chain is Oxysterol-binding protein-related protein 1C (ORP1C) from Arabidopsis thaliana (Mouse-ear cress).